The primary structure comprises 310 residues: MIIVTGGAGFIGSNIVKALNDKGITDILVVDNLKDGTKFVNLVDLNIADYMDKEDFLIQIMSGEELGDIEAIFHEGACSSTTEWDGKYMMDNNYQYSKELLHYCLERGIPFLYASSAATYGGRTSDFIESREYEKPLNVYGYSKFLFDEYVRQILPEANSQIVGFRYFNVYGPREGHKGSMASVAFHLNTQLNNGESPKLFEGSENFKRDFVYVGDVAAVNLWFLESGKSGIFNLGTGRAESFQAVADATLAYHKKGSIEYIPFPDKLKGRYQAFTQADLTNLRNAGYDKPFKTVAEGVTEYMAWLNRDA.

NADP(+)-binding positions include 10–11 (FI), 31–32 (DN), K38, K53, 75–79 (EGACS), and N92. The Proton acceptor role is filled by Y140. K144 lines the NADP(+) pocket. Residue N169 participates in substrate binding. NADP(+) contacts are provided by V170 and K178. The active-site Proton acceptor is the K178. Substrate-binding positions include S180, H187, 201–204 (FEGS), R209, and Y272.

Belongs to the NAD(P)-dependent epimerase/dehydratase family. HldD subfamily. In terms of assembly, homopentamer. The cofactor is NADP(+).

It carries out the reaction ADP-D-glycero-beta-D-manno-heptose = ADP-L-glycero-beta-D-manno-heptose. It participates in nucleotide-sugar biosynthesis; ADP-L-glycero-beta-D-manno-heptose biosynthesis; ADP-L-glycero-beta-D-manno-heptose from D-glycero-beta-D-manno-heptose 7-phosphate: step 4/4. Its function is as follows. Catalyzes the interconversion between ADP-D-glycero-beta-D-manno-heptose and ADP-L-glycero-beta-D-manno-heptose via an epimerization at carbon 6 of the heptose. The polypeptide is ADP-L-glycero-D-manno-heptose-6-epimerase (Salmonella paratyphi C (strain RKS4594)).